The chain runs to 955 residues: Glycine dehydrogenase (decarboxylating) (955 aa).

K705 is subject to N6-(pyridoxal phosphate)lysine.

Belongs to the GcvP family. In terms of assembly, the glycine cleavage system is composed of four proteins: P, T, L and H. Pyridoxal 5'-phosphate serves as cofactor.

It carries out the reaction N(6)-[(R)-lipoyl]-L-lysyl-[glycine-cleavage complex H protein] + glycine + H(+) = N(6)-[(R)-S(8)-aminomethyldihydrolipoyl]-L-lysyl-[glycine-cleavage complex H protein] + CO2. Functionally, the glycine cleavage system catalyzes the degradation of glycine. The P protein binds the alpha-amino group of glycine through its pyridoxal phosphate cofactor; CO(2) is released and the remaining methylamine moiety is then transferred to the lipoamide cofactor of the H protein. The polypeptide is Glycine dehydrogenase (decarboxylating) (Aliivibrio salmonicida (strain LFI1238) (Vibrio salmonicida (strain LFI1238))).